The following is a 214-amino-acid chain: YINYKNMSNQHTLLMSNLLPVGSNISTWWNFGSMLLICLMLQTLTGFFLAIHYTANINLAFSSVVHITRDVPYGWTMQNLHAISASLFFICIYIHIARGLYYGLYMNKEVWLSGVTLLFTLMATAFFGYVLPWGQMSFWAATVITNLLTAIPYLGTMLTTWLWGGFSXNDPTLTRFFALHFILPFIIISLSSAHIMLLHAEGSNNPLGTNSDID.

4 helical membrane-spanning segments follow: residues 31–51 (FGSM…FLAI), 75–96 (WTMQ…YIHI), 111–131 (WLSG…GYVL), and 176–196 (FFAL…AHIM). Residues His81 and His95 each contribute to the heme b site. Residues His180 and His194 each coordinate heme b. His199 contacts a ubiquinone.

Belongs to the cytochrome b family. In terms of assembly, the cytochrome bc1 complex contains 3 respiratory subunits (MT-CYB, CYC1 and UQCRFS1), 2 core proteins (UQCRC1 and UQCRC2) and probably 6 low-molecular weight proteins. Heme b serves as cofactor.

The protein localises to the mitochondrion inner membrane. Functionally, component of the ubiquinol-cytochrome c reductase complex (complex III or cytochrome b-c1 complex) that is part of the mitochondrial respiratory chain. The b-c1 complex mediates electron transfer from ubiquinol to cytochrome c. Contributes to the generation of a proton gradient across the mitochondrial membrane that is then used for ATP synthesis. The chain is Cytochrome b (MT-CYB) from Elapsoidea semiannulata (Angolan garter snake).